A 591-amino-acid polypeptide reads, in one-letter code: UvrABC system protein C (591 aa).

Positions 14 to 91 constitute a GIY-YIG domain; that stretch reads DQPGCYLMKD…IKKHDPKYNV (78 aa). The UVR domain occupies 196–231; sequence KEVKVELEKKMHKAAEELNFERAKELRDTLGYMEAV.

This sequence belongs to the UvrC family. Interacts with UvrB in an incision complex.

The protein localises to the cytoplasm. Its function is as follows. The UvrABC repair system catalyzes the recognition and processing of DNA lesions. UvrC both incises the 5' and 3' sides of the lesion. The N-terminal half is responsible for the 3' incision and the C-terminal half is responsible for the 5' incision. In Halalkalibacterium halodurans (strain ATCC BAA-125 / DSM 18197 / FERM 7344 / JCM 9153 / C-125) (Bacillus halodurans), this protein is UvrABC system protein C.